The primary structure comprises 260 residues: UPF0246 protein BceJ2315_22780 (260 aa).

This sequence belongs to the UPF0246 family.

The sequence is that of UPF0246 protein BceJ2315_22780 from Burkholderia cenocepacia (strain ATCC BAA-245 / DSM 16553 / LMG 16656 / NCTC 13227 / J2315 / CF5610) (Burkholderia cepacia (strain J2315)).